Reading from the N-terminus, the 282-residue chain is MAKKRAGNRETESSPLVEQEPRPSKETPVPKGAQSPGGASARMSILLLVVIFACSACVMYLVFRNFPQLSEDEREKIKIPKDMEDAKALGTVLSKYKDTYYTQVLLAYFATYIFLQTFAIPGSIFLSILSGYLYPFPLALFLVCLCSGLGASFCYMLSYLVGRPMVYKYLTERAQKWSQQVDKHREHLINYIIFLRITPFLPNWFINITSPVINVPLGVFFLGTFLGVAPPSFVAINAGTTLYKLTTAGEAVSWNSLLVLGVLAVVSILPVCFQKKLQQKLE.

The tract at residues 1–36 is disordered; sequence MAKKRAGNRETESSPLVEQEPRPSKETPVPKGAQSP. 6 helical membrane passes run 43-63, 102-122, 138-160, 188-208, 216-236, and 251-271; these read MSILLLVVIFACSACVMYLVF, TQVLLAYFATYIFLQTFAIPG, LALFLVCLCSGLGASFCYMLSYL, LINYIIFLRITPFLPNWFINI, PLGVFFLGTFLGVAPPSFVAI, and AVSWNSLLVLGVLAVVSILPV. The segment at 131–242 is VTT domain; required for its function in autophagy; that stretch reads GYLYPFPLAL…FVAINAGTTL (112 aa).

The protein belongs to the TMEM41 family.

The protein localises to the endoplasmic reticulum membrane. It localises to the endomembrane system. The enzyme catalyses a 1,2-diacyl-sn-glycero-3-phospho-L-serine(in) = a 1,2-diacyl-sn-glycero-3-phospho-L-serine(out). The catalysed reaction is cholesterol(in) = cholesterol(out). It carries out the reaction a 1,2-diacyl-sn-glycero-3-phosphocholine(in) = a 1,2-diacyl-sn-glycero-3-phosphocholine(out). It catalyses the reaction a 1,2-diacyl-sn-glycero-3-phosphoethanolamine(in) = a 1,2-diacyl-sn-glycero-3-phosphoethanolamine(out). Its function is as follows. Phospholipid scramblase involved in lipid homeostasis and membrane dynamics processes. Has phospholipid scramblase activity toward cholesterol and phosphatidylserine, as well as phosphatidylethanolamine and phosphatidylcholine. Required for autophagosome formation: participates in early stages of autophagosome biogenesis at the endoplasmic reticulum (ER) membrane by reequilibrating the leaflets of the ER as lipids are extracted by atg2 (atg2a or atg2b) to mediate autophagosome assembly. In addition to autophagy, involved in other processes in which phospholipid scramblase activity is required. Required for normal motor neuron development. The polypeptide is Transmembrane protein 41B (Danio rerio (Zebrafish)).